We begin with the raw amino-acid sequence, 629 residues long: ATP-dependent RNA helicase DBP6 (629 aa).

The tract at residues 1–129 (MFASRFDPSQ…GIEDEAASTH (129 aa)) is disordered. Acidic residues predominate over residues 72–84 (ASEEDSSEVEEEE). 3 positions are modified to phosphoserine: serine 73, serine 77, and serine 78. Polar residues predominate over residues 88–103 (STHSTVLSRFKQTVSL). Residues 116–125 (KEDEGIEDEA) show a composition bias toward acidic residues. The Q motif motif lies at 197–205 (TFPIQSIIL). One can recognise a Helicase ATP-binding domain in the interval 221–401 (RNFTRRIGDI…GLNLYKPKLF (181 aa)). ATP is bound at residue 234–241 (AATGSGKT). The DEAD box motif lies at 341-344 (DEAD). The 167-residue stretch at 437–603 (SICQFMAHSP…SVQPLELDFT (167 aa)) folds into the Helicase C-terminal domain.

It belongs to the DEAD box helicase family. DDX51/DBP6 subfamily. In terms of assembly, associated with pre-ribosomal particles. Interacts with DBP9 and RSA3. Together with NOP8, URB1, URB2 and RSA3, forms an RNA-independent complex, which is required during early maturation of nascent 60S ribosomal subunits.

The protein localises to the nucleus. It localises to the nucleolus. The catalysed reaction is ATP + H2O = ADP + phosphate + H(+). Its function is as follows. ATP-binding RNA helicase involved in the biogenesis of 60S ribosomal subunits and is required for the normal formation of 25S and 5.8S rRNAs. This chain is ATP-dependent RNA helicase DBP6 (DBP6), found in Saccharomyces cerevisiae (strain ATCC 204508 / S288c) (Baker's yeast).